We begin with the raw amino-acid sequence, 180 residues long: Translation initiation factor IF-3 (180 aa).

It belongs to the IF-3 family. As to quaternary structure, monomer.

It localises to the cytoplasm. IF-3 binds to the 30S ribosomal subunit and shifts the equilibrium between 70S ribosomes and their 50S and 30S subunits in favor of the free subunits, thus enhancing the availability of 30S subunits on which protein synthesis initiation begins. In Caldanaerobacter subterraneus subsp. tengcongensis (strain DSM 15242 / JCM 11007 / NBRC 100824 / MB4) (Thermoanaerobacter tengcongensis), this protein is Translation initiation factor IF-3.